We begin with the raw amino-acid sequence, 131 residues long: Small ribosomal subunit protein eS17 (131 aa).

It belongs to the eukaryotic ribosomal protein eS17 family.

This is Small ribosomal subunit protein eS17 (RpS17) from Drosophila melanogaster (Fruit fly).